The chain runs to 132 residues: Inactive D-aminoacyl-tRNA deacylase (132 aa).

Belongs to the DTD family.

In terms of biological role, a non-functional D-aminoacyl-tRNA deacylase. In Bacillus subtilis (strain 168), this protein is Inactive D-aminoacyl-tRNA deacylase.